The chain runs to 405 residues: Acetylornithine aminotransferase 2 (405 aa).

Pyridoxal 5'-phosphate contacts are provided by residues 105–106 and F138; that span reads GT. A N(2)-acetyl-L-ornithine-binding site is contributed by R141. A pyridoxal 5'-phosphate-binding site is contributed by 224-227; that stretch reads DEVQ. K254 carries the post-translational modification N6-(pyridoxal phosphate)lysine. Residue S282 participates in N(2)-acetyl-L-ornithine binding. T283 is a pyridoxal 5'-phosphate binding site.

It belongs to the class-III pyridoxal-phosphate-dependent aminotransferase family. ArgD subfamily. Homodimer. Pyridoxal 5'-phosphate serves as cofactor.

The protein resides in the cytoplasm. The enzyme catalyses N(2)-acetyl-L-ornithine + 2-oxoglutarate = N-acetyl-L-glutamate 5-semialdehyde + L-glutamate. The protein operates within amino-acid biosynthesis; L-arginine biosynthesis; N(2)-acetyl-L-ornithine from L-glutamate: step 4/4. This is Acetylornithine aminotransferase 2 from Caulobacter vibrioides (strain ATCC 19089 / CIP 103742 / CB 15) (Caulobacter crescentus).